We begin with the raw amino-acid sequence, 98 residues long: Phosphoribosyl-ATP pyrophosphatase (98 aa).

The protein belongs to the PRA-PH family.

The protein localises to the cytoplasm. It carries out the reaction 1-(5-phospho-beta-D-ribosyl)-ATP + H2O = 1-(5-phospho-beta-D-ribosyl)-5'-AMP + diphosphate + H(+). It participates in amino-acid biosynthesis; L-histidine biosynthesis; L-histidine from 5-phospho-alpha-D-ribose 1-diphosphate: step 2/9. The chain is Phosphoribosyl-ATP pyrophosphatase from Haloarcula marismortui (strain ATCC 43049 / DSM 3752 / JCM 8966 / VKM B-1809) (Halobacterium marismortui).